The following is a 427-amino-acid chain: Tryptophan synthase beta chain (427 aa).

Position 100 is an N6-(pyridoxal phosphate)lysine (K100).

It belongs to the TrpB family. In terms of assembly, tetramer of two alpha and two beta chains. Pyridoxal 5'-phosphate serves as cofactor.

The catalysed reaction is (1S,2R)-1-C-(indol-3-yl)glycerol 3-phosphate + L-serine = D-glyceraldehyde 3-phosphate + L-tryptophan + H2O. It functions in the pathway amino-acid biosynthesis; L-tryptophan biosynthesis; L-tryptophan from chorismate: step 5/5. The beta subunit is responsible for the synthesis of L-tryptophan from indole and L-serine. The sequence is that of Tryptophan synthase beta chain (trpB) from Streptomyces coelicolor (strain ATCC BAA-471 / A3(2) / M145).